The following is a 123-amino-acid chain: Large ribosomal subunit protein bL12 (123 aa).

It belongs to the bacterial ribosomal protein bL12 family. Homodimer. Part of the ribosomal stalk of the 50S ribosomal subunit. Forms a multimeric L10(L12)X complex, where L10 forms an elongated spine to which 2 to 4 L12 dimers bind in a sequential fashion. Binds GTP-bound translation factors.

Its function is as follows. Forms part of the ribosomal stalk which helps the ribosome interact with GTP-bound translation factors. Is thus essential for accurate translation. The polypeptide is Large ribosomal subunit protein bL12 (Pseudoalteromonas atlantica (strain T6c / ATCC BAA-1087)).